The chain runs to 213 residues: MAQETNQTPGPMLCSTGCGFYGNPRTNGMCSVCYKEHLQRQQNSGRMSPMGTASGSNSPTSDSASVQRADTSLNNCEGAAGSTSEKSRNVPVAALPVTQQMTEMSISREDKITTPKTEVSEPVVTQPSPSVSQPSTSQSEEKAPELPKPKKNRCFMCRKKVGLTGFDCRCGNLFCGLHRYSDKHNCPYDYKAEAAAKIRKENPVVVAEKIQRI.

An A20-type zinc finger spans residues 8 to 42; the sequence is TPGPMLCSTGCGFYGNPRTNGMCSVCYKEHLQRQQ. Residues cysteine 14, cysteine 18, cysteine 30, and cysteine 33 each contribute to the Zn(2+) site. Positions 39–149 are disordered; that stretch reads QRQQNSGRMS…EEKAPELPKP (111 aa). Polar residues predominate over residues 40–75; that stretch reads RQQNSGRMSPMGTASGSNSPTSDSASVQRADTSLNN. Phosphoserine is present on residues serine 48 and serine 58. The span at 120-138 shows a compositional bias: low complexity; that stretch reads SEPVVTQPSPSVSQPSTSQ. The span at 139–148 shows a compositional bias: basic and acidic residues; that stretch reads SEEKAPELPK. The segment at 148–194 adopts an AN1-type zinc-finger fold; that stretch reads KPKKNRCFMCRKKVGLTGFDCRCGNLFCGLHRYSDKHNCPYDYKAEA. Zn(2+) is bound by residues cysteine 154, cysteine 157, cysteine 168, cysteine 170, cysteine 175, histidine 178, histidine 184, and cysteine 186. Lysine 209 carries the N6-acetyllysine modification.

As to quaternary structure, interacts with ubiquitin and polyubiquitinated proteins. Identified in a heterotrimeric complex with ubiquitin and SQSTM1, where ZFAND5 and SQSTM1 both interact with the same ubiquitin molecule. Homooligomer and/or heterooligomer. Interacts (via A20-type domain) with IKBKG and RIPK1 and with TRAF6 (via AN1-type domain). As to expression, highly expressed in skeletal muscle. Expressed in fetal cochlea. Also expressed in infant brain, fetal heart, pancreatic islet, melanocyte, pineal gland, placenta, corneal stroma, and parathyroid tumor. Weakly expressed or undetectable in adult brain, heart, colon, thymus, spleen, kidney, liver, small intestine, placenta, lung and peripheral blood leukocytes. Expressed in rhabdomyosarcoma RD cells (at protein level).

The protein resides in the cytoplasm. Its function is as follows. Involved in protein degradation via the ubiquitin-proteasome system. May act by anchoring ubiquitinated proteins to the proteasome. Plays a role in ubiquitin-mediated protein degradation during muscle atrophy. Plays a role in the regulation of NF-kappa-B activation and apoptosis. Inhibits NF-kappa-B activation triggered by overexpression of RIPK1 and TRAF6 but not of RELA. Also inhibits tumor necrosis factor (TNF), IL-1 and TLR4-induced NF-kappa-B activation in a dose-dependent manner. Overexpression sensitizes cells to TNF-induced apoptosis. Is a potent inhibitory factor for osteoclast differentiation. The protein is AN1-type zinc finger protein 5 (ZFAND5) of Homo sapiens (Human).